A 1790-amino-acid polypeptide reads, in one-letter code: E3 ubiquitin-protein ligase RBBP6 (1790 aa).

The region spanning V4–P76 is the DWNN domain. An N6-acetyllysine modification is found at K130. A CCHC-type zinc finger spans residues Y160–T177. S245, S246, S247, and S248 each carry phosphoserine. The segment at C260–H301 adopts an RING-type; degenerate zinc-finger fold. Residues Y329 to R353 form a disordered region. Residues L337 to P349 are compositionally biased toward pro residues. The residue at position 361 (S361) is a Phosphoserine. The segment at V374–A408 is disordered. A compositionally biased stretch (low complexity) spans S376–S390. S517 carries the phosphoserine modification. Disordered stretches follow at residues I533 to S599, Q622 to E641, R648 to A667, and K675 to F797. The span at V558 to S599 shows a compositional bias: pro residues. Over residues Q622–P635 the composition is skewed to polar residues. Over residues R686–F720 the composition is skewed to low complexity. Residues R736 to S771 are compositionally biased toward basic residues. Phosphoserine is present on residues S769, S771, S773, S781, S816, S862, and S874. Disordered regions lie at residues A850–T1292 and W1322–V1790. Residues L903 to E923 show a composition bias toward basic and acidic residues. Over residues N932–R941 the composition is skewed to basic residues. Composition is skewed to basic and acidic residues over residues E956–T972, S980–P991, V1002–D1018, P1042–S1072, and S1096–E1161. S958 is subject to Phosphoserine. The interaction with RB1 stretch occupies residues D983–L1139. T985 carries the post-translational modification Phosphothreonine. Residues K1107 and K1169 each participate in a glycyl lysine isopeptide (Lys-Gly) (interchain with G-Cter in SUMO2) cross-link. S1179 carries the phosphoserine modification. Basic and acidic residues-rich tracts occupy residues R1182 to I1200 and E1231 to K1249. The span at E1260–G1277 shows a compositional bias: polar residues. The residue at position 1272 (T1272) is a Phosphothreonine. Position 1278 is a phosphoserine (S1278). Basic and acidic residues predominate over residues R1281–R1291. S1329, S1342, and S1348 each carry phosphoserine. Residues T1336–S1358 show a composition bias toward polar residues. Basic and acidic residues-rich tracts occupy residues Y1363 to S1392, E1400 to H1440, K1449 to V1460, T1469 to E1507, and K1515 to K1580. The interaction with p53 stretch occupies residues R1434–D1544. The residue at position 1469 (T1469) is a Phosphothreonine. Residues L1618–D1627 show a composition bias toward polar residues. Residues E1634–S1646 show a composition bias toward acidic residues. A phosphoserine mark is found at S1646, S1648, and S1651. A compositionally biased stretch (basic and acidic residues) spans K1663–E1675. Over residues R1689–Q1724 the composition is skewed to low complexity. Basic residues predominate over residues K1727–H1750. Residues A1751 to S1760 are compositionally biased toward basic and acidic residues. Over residues Q1761–N1773 the composition is skewed to basic residues. Positions K1774 to V1790 are enriched in basic and acidic residues.

In terms of assembly, interacts with MDM2 and YBX1. Also interacts with p53/TP53 and RB1. Interacts with NEK6. Interacts with ZBTB38. Phosphorylated by NEK6. As to expression, highly expressed in testis. Expressed at lower levels in brain, heart, kidney, liver, lung, skeletal muscle, spleen, thymus and tongue.

It is found in the nucleus. Its subcellular location is the nucleolus. The protein resides in the chromosome. The protein localises to the cytoplasm. It localises to the cytoskeleton. It is found in the microtubule organizing center. Its subcellular location is the centrosome. It carries out the reaction S-ubiquitinyl-[E2 ubiquitin-conjugating enzyme]-L-cysteine + [acceptor protein]-L-lysine = [E2 ubiquitin-conjugating enzyme]-L-cysteine + N(6)-ubiquitinyl-[acceptor protein]-L-lysine.. The protein operates within protein modification; protein ubiquitination. Functionally, E3 ubiquitin-protein ligase which promotes ubiquitination of YBX1, leading to its degradation by the proteasome. May play a role as a scaffold protein to promote the assembly of the p53/TP53-MDM2 complex, resulting in increase of MDM2-mediated ubiquitination and degradation of p53/TP53; may function as negative regulator of p53/TP53, leading to both apoptosis and cell growth retardation. Regulates DNA-replication and common fragile sites (CFS) stability in a ZBTB38- and MCM10-dependent manner. Controls ZBTB38 protein stability and abundance via ubiquitination and proteasomal degradation, and ZBTB38 in turn negatively regulates the expression of MCM10 which plays an important role in DNA-replication. The chain is E3 ubiquitin-protein ligase RBBP6 (Rbbp6) from Mus musculus (Mouse).